A 252-amino-acid polypeptide reads, in one-letter code: Triosephosphate isomerase (252 aa).

10-12 serves as a coordination point for substrate; sequence NWK. The active-site Electrophile is the His96. The Proton acceptor role is filled by Glu168. Residues Gly174, Ser214, and 235–236 each bind substrate; that span reads GG.

Belongs to the triosephosphate isomerase family. In terms of assembly, homodimer.

The protein resides in the cytoplasm. It carries out the reaction D-glyceraldehyde 3-phosphate = dihydroxyacetone phosphate. The protein operates within carbohydrate biosynthesis; gluconeogenesis. It functions in the pathway carbohydrate degradation; glycolysis; D-glyceraldehyde 3-phosphate from glycerone phosphate: step 1/1. Involved in the gluconeogenesis. Catalyzes stereospecifically the conversion of dihydroxyacetone phosphate (DHAP) to D-glyceraldehyde-3-phosphate (G3P). This chain is Triosephosphate isomerase, found in Streptococcus gordonii (strain Challis / ATCC 35105 / BCRC 15272 / CH1 / DL1 / V288).